The chain runs to 246 residues: MRSGVIAQKLGMTRVYNDAGEHVPVTVLRLENCQVIAQRTIEKNGYTAVQLGVGFAKVKNTSRALRGHFAKVSVEPKAKIAEFRVSPDNLLDIGTEITAQHFVPGQRVDVTGTSIGKGFAGVMKRHNFGGHRASHGNSITHRAHGSTGQCQDPGKVFKGKKMAGHMGQVRVTTQNIEVVSTDVERGLILVRGAVSGSKGAWILVRDAVKRPLPDNVPRPAGIRQLAKEKTEMVTPVTETSEAEGAE.

N5-methylglutamine is present on Q151.

Belongs to the universal ribosomal protein uL3 family. Part of the 50S ribosomal subunit. Forms a cluster with proteins L14 and L19. Methylated by PrmB.

Functionally, one of the primary rRNA binding proteins, it binds directly near the 3'-end of the 23S rRNA, where it nucleates assembly of the 50S subunit. The protein is Large ribosomal subunit protein uL3 of Bartonella quintana (strain Toulouse) (Rochalimaea quintana).